The primary structure comprises 266 residues: Enterotoxin type C-3 (266 aa).

The signal sequence occupies residues 1–27 (MYKRLFISRVILIFALILVISTPNVLA). Zn(2+) contacts are provided by Asp36 and Asp110. Residues Cys120 and Cys137 are joined by a disulfide bond. Zn(2+)-binding residues include His145 and His149.

The protein belongs to the staphylococcal/streptococcal toxin family. Interacts with MHC class II molecules composed of alpha/HLA-DRA and beta/HLA-DRB1 chains. Interacts with host T-cell receptor/TCR beta variable chain TRBV8-2.

It is found in the secreted. In terms of biological role, staphylococcal enterotoxin that activates the host immune system by binding as unprocessed molecules to major histocompatibility (MHC) complex class II and T-cell receptor (TCR) molecules. In turn, this ternary complex activates a large number of T-lymphocytes initiating a systemic release of pro-inflammatory cytokines. Also causes the intoxication staphylococcal food poisoning syndrome. This is Enterotoxin type C-3 (entC3) from Staphylococcus aureus.